A 500-amino-acid chain; its full sequence is Adenylosuccinate synthetase, chloroplastic (500 aa).

GTP-binding positions include 87 to 93 (GDEGKGK) and 115 to 117 (GHT). Aspartate 88 serves as the catalytic Proton acceptor. Mg(2+) contacts are provided by aspartate 88 and glycine 115. IMP-binding positions include 88–91 (DEGK), 113–116 (NAGH), threonine 205, arginine 219, glutamine 299, threonine 314, and arginine 378. The Proton donor role is filled by histidine 116. 374 to 380 (TTTGRPR) contributes to the substrate binding site. GTP is bound by residues arginine 380, 406–408 (KLD), and 489–491 (GIG).

Belongs to the adenylosuccinate synthetase family. In terms of assembly, homodimer. The cofactor is Mg(2+).

Its subcellular location is the plastid. It localises to the chloroplast. It catalyses the reaction IMP + L-aspartate + GTP = N(6)-(1,2-dicarboxyethyl)-AMP + GDP + phosphate + 2 H(+). Its pathway is purine metabolism; AMP biosynthesis via de novo pathway; AMP from IMP: step 1/2. Its function is as follows. Plays an important role in the de novo pathway and in the salvage pathway of purine nucleotide biosynthesis. Catalyzes the first committed step in the biosynthesis of AMP from IMP. This Solanum bulbocastanum (Wild potato) protein is Adenylosuccinate synthetase, chloroplastic.